A 184-amino-acid polypeptide reads, in one-letter code: C-phycoerythrin class 1 subunit beta (184 aa).

2 residues coordinate (2R,3E)-phycoerythrobilin: Cys-50 and Cys-61. Residue Asn-72 is modified to N4-methylasparagine. Residues Cys-82 and Cys-165 each coordinate (2R,3E)-phycoerythrobilin.

The protein belongs to the phycobiliprotein family. As to quaternary structure, heterodimer of an alpha and a beta chain. Post-translationally, contains three covalently linked phycoerythrobilin chromophores.

It is found in the cellular thylakoid membrane. Its function is as follows. Light-harvesting photosynthetic bile pigment-protein from the phycobiliprotein complex. The sequence is that of C-phycoerythrin class 1 subunit beta (cpeB) from Synechococcus sp. (strain WH8020).